Here is a 291-residue protein sequence, read N- to C-terminus: Gamma-sarcoglycan (291 aa).

The chain crosses the membrane as a helical; Signal-anchor for type II membrane protein span at residues 38-58; the sequence is LFVLLLLIVLLVNFALTIWIL. The Extracellular segment spans residues 59 to 291; sequence RVMWFSPVGM…TCHEHSHLCL (233 aa). N-linked (GlcNAc...) asparagine glycosylation occurs at N110. 2 disulfide bridges follow: C265–C290 and C267–C283.

Belongs to the sarcoglycan beta/delta/gamma/zeta family. As to quaternary structure, interacts with the syntrophin SNTA1. Cross-link to form 2 major subcomplexes: one consisting of SGCB, SGCD and SGCG and the other consisting of SGCB and SGCD. The association between SGCB and SGCG is particularly strong while SGCA is loosely associated with the other sarcoglycans. Interacts with FLNC. In terms of processing, disulfide bonds are present.

It is found in the cell membrane. It localises to the sarcolemma. The protein localises to the cytoplasm. Its subcellular location is the cytoskeleton. Functionally, component of the sarcoglycan complex, a subcomplex of the dystrophin-glycoprotein complex which forms a link between the F-actin cytoskeleton and the extracellular matrix. This Bos taurus (Bovine) protein is Gamma-sarcoglycan (SGCG).